The following is a 31-amino-acid chain: Morintide mO3 (31 aa).

In terms of domain architecture, Chitin-binding type-1 spans 1–30; that stretch reads NRLCCSQYGFCGTTSEYCSRANGCQSNCWG. 2 disulfide bridges follow: C4/C18 and C24/C28.

In terms of tissue distribution, seeds (at protein level).

Chitin-binding protein which functions in defense against chitin-containing fungal pathogens. The sequence is that of Morintide mO3 from Moringa oleifera (Horseradish tree).